The primary structure comprises 186 residues: Adenine phosphoribosyltransferase (186 aa).

It belongs to the purine/pyrimidine phosphoribosyltransferase family. As to quaternary structure, homodimer.

The protein resides in the cytoplasm. It carries out the reaction AMP + diphosphate = 5-phospho-alpha-D-ribose 1-diphosphate + adenine. It functions in the pathway purine metabolism; AMP biosynthesis via salvage pathway; AMP from adenine: step 1/1. In terms of biological role, catalyzes a salvage reaction resulting in the formation of AMP, that is energically less costly than de novo synthesis. The protein is Adenine phosphoribosyltransferase of Xanthomonas campestris pv. campestris (strain B100).